The following is a 238-amino-acid chain: Uridylate kinase (238 aa).

12–15 serves as a coordination point for ATP; sequence KLSG. Residue glycine 54 coordinates UMP. Residues glycine 55 and arginine 59 each contribute to the ATP site. UMP is bound by residues aspartate 74 and 135-142; that span reads TGNPFFTT. Threonine 162, tyrosine 168, and aspartate 171 together coordinate ATP.

The protein belongs to the UMP kinase family. Homohexamer.

It is found in the cytoplasm. It carries out the reaction UMP + ATP = UDP + ADP. The protein operates within pyrimidine metabolism; CTP biosynthesis via de novo pathway; UDP from UMP (UMPK route): step 1/1. With respect to regulation, inhibited by UTP. Catalyzes the reversible phosphorylation of UMP to UDP. In Bordetella parapertussis (strain 12822 / ATCC BAA-587 / NCTC 13253), this protein is Uridylate kinase.